The primary structure comprises 74 residues: Probable tetrachloroethene reductive dehalogenase membrane anchor protein (74 aa).

Helical transmembrane passes span 11–31 (ALGL…ISMG) and 40–60 (AGSI…FLLM).

The protein belongs to the PceB family.

It localises to the cell inner membrane. May act as a membrane anchor for the tetrachloroethene reductive dehalogenase PceA. This is Probable tetrachloroethene reductive dehalogenase membrane anchor protein from Sulfurospirillum multivorans (Dehalospirillum multivorans).